A 1017-amino-acid polypeptide reads, in one-letter code: EMILIN-1 (1017 aa).

A signal peptide spans 1–21; it reads MAPRALWSCYLCCLLTIATEA. The EMI domain maps to 56–133; it reads HRNWCAYVVT…QGYGGDDCGE (78 aa). Disulfide bonds link cysteine 60–cysteine 123, cysteine 87–cysteine 94, and cysteine 122–cysteine 131. 2 disordered regions span residues 134 to 180 and 259 to 289; these read GPAS…SEKV and ELGH…GPSE. Low complexity predominate over residues 154–167; sequence RPNLSGSSAGSHLS. N-linked (GlcNAc...) asparagine glycosylation occurs at asparagine 156. Coiled-coil stretches lie at residues 171-211, 237-266, and 310-374; these read GEGP…LAED, ETLS…LNNH, and LDGF…DVVT. The segment at 383-403 is disordered; the sequence is RRGSELGGAAGQGGHPPGYTS. Positions 387–398 are enriched in gly residues; it reads ELGGAAGQGGHP. Asparagine 416, asparagine 456, asparagine 562, and asparagine 659 each carry an N-linked (GlcNAc...) asparagine glycan. Positions 519 to 573 form a coiled coil; the sequence is LHEAEAAGEAQQAVLEGLQGLLSRLRERMDAQEETAAEILLRLNLTAAQLSQLEG. Residues 676-697 adopt a coiled-coil conformation; sequence LADLGATKDSIISEINRLQQEA. N-linked (GlcNAc...) asparagine glycosylation is found at asparagine 767 and asparagine 795. A coiled-coil region spans residues 789-809; that stretch reads RRLGALNNSLLLLEDRLQQLS. A compositionally biased stretch (low complexity) spans 811–820; sequence KDFTGPSGKA. Residues 811–866 form a disordered region; the sequence is KDFTGPSGKAGPPGPPGLQGPSGPAGPPGPPGKDGQQGAIGPPGPQGEQGAEGAPA. The Collagen-like domain occupies 815-865; it reads GPSGKAGPPGPPGLQGPSGPAGPPGPPGKDGQQGAIGPPGPQGEQGAEGAP. The span at 822 to 841 shows a compositional bias: pro residues; the sequence is PPGPPGLQGPSGPAGPPGPP. Positions 843-866 are enriched in low complexity; sequence KDGQQGAIGPPGPQGEQGAEGAPA. In terms of domain architecture, C1q spans 867–1014; it reads APVPRVAFSA…GALLYEDTEL (148 aa).

In terms of assembly, homotrimer associated through a moderately stable interaction of the C-terminal globular C1q domains, allowing the nucleation of the triple helix and then a further quaternary assembly to higher-order polymers via intermolecular disulfide bonds. Interacts with EMILIN2. Interacts with EFEMP2; this interaction promotes the incorporation of EFEMP2 into the extracellular matrix.

The protein localises to the secreted. It localises to the extracellular space. It is found in the extracellular matrix. Involved in elastic and collagen fibers formation. It is required for EFEMP2 deposition into the extracellular matrix, and collagen network assembly and cross-linking via protein-lysine 6-oxidase/LOX activity. May be responsible for anchoring smooth muscle cells to elastic fibers, and may be involved the processes that regulate vessel assembly. Has cell adhesive capacity. May have a function in placenta formation and initial organogenesis and a later role in interstitial connective tissue. This Mus musculus (Mouse) protein is EMILIN-1 (Emilin1).